The primary structure comprises 895 residues: Glutamate receptor 2.3 (895 aa).

Positions 1–23 are cleaved as a signal peptide; the sequence is MRTEKLFFCILLVFFFCLEFNRG. At 24-582 the chain is on the extracellular side; the sequence is QNNGKTLVDV…ILFMKPLSWK (559 aa). Residues Asn-52, Asn-203, Asn-266, Asn-330, Asn-342, Asn-477, and Asn-542 are each glycosylated (N-linked (GlcNAc...) asparagine). The chain crosses the membrane as a helical span at residues 583–603; the sequence is LWLTSFISFFLVGCTVWVLEY. Residues 604 to 610 lie on the Cytoplasmic side of the membrane; the sequence is KRNPDFS. The chain crosses the membrane as a helical span at residues 611-631; the sequence is GPPRFQASTICWFAFSTMVFA. Residues 632 to 635 are Cytoplasmic-facing; the sequence is PRER. A helical membrane pass occupies residues 636-656; that stretch reads VFSFWARALVIAWYFLVLVLT. Residues 657-830 lie on the Extracellular side of the membrane; sequence QSYTASLASL…FTSRQLDIDS (174 aa). A helical transmembrane segment spans residues 831 to 851; it reads FLFLFVGVLLVCVMALGNFTY. The Cytoplasmic portion of the chain corresponds to 852–895; sequence CFLAKDQVSYLDKVEMSPCSSSQQMPVKRKTQLNMSQVHDQDSL. A disordered region spans residues 873-895; that stretch reads SQQMPVKRKTQLNMSQVHDQDSL.

Belongs to the glutamate-gated ion channel (TC 1.A.10.1) family. May form heteromers. As to expression, expressed predominantly in roots.

The protein localises to the membrane. Its function is as follows. Glutamate-gated receptor that probably acts as a non-selective cation channel. May be involved in light-signal transduction and calcium homeostasis via the regulation of calcium influx into cells. This is Glutamate receptor 2.3 (GLR2.3) from Arabidopsis thaliana (Mouse-ear cress).